The sequence spans 111 residues: Large ribosomal subunit protein bL21 (111 aa).

It belongs to the bacterial ribosomal protein bL21 family. In terms of assembly, part of the 50S ribosomal subunit. Contacts protein L20.

Functionally, this protein binds to 23S rRNA in the presence of protein L20. In Thermosynechococcus vestitus (strain NIES-2133 / IAM M-273 / BP-1), this protein is Large ribosomal subunit protein bL21.